Consider the following 388-residue polypeptide: Succinate--CoA ligase [ADP-forming] subunit beta (388 aa).

Residues 9-236 enclose the ATP-grasp domain; it reads KKLFAEHGVP…VAAVDPLEQK (228 aa). Residues Lys-45, 52–54, Glu-91, Ser-94, and Glu-99 contribute to the ATP site; that span reads GRG. 2 residues coordinate Mg(2+): Asn-191 and Asp-205. Residues Asn-256 and 318 to 320 contribute to the substrate site; that span reads GIT.

Belongs to the succinate/malate CoA ligase beta subunit family. Heterotetramer of two alpha and two beta subunits. It depends on Mg(2+) as a cofactor.

The enzyme catalyses succinate + ATP + CoA = succinyl-CoA + ADP + phosphate. It catalyses the reaction GTP + succinate + CoA = succinyl-CoA + GDP + phosphate. Its pathway is carbohydrate metabolism; tricarboxylic acid cycle; succinate from succinyl-CoA (ligase route): step 1/1. Its function is as follows. Succinyl-CoA synthetase functions in the citric acid cycle (TCA), coupling the hydrolysis of succinyl-CoA to the synthesis of either ATP or GTP and thus represents the only step of substrate-level phosphorylation in the TCA. The beta subunit provides nucleotide specificity of the enzyme and binds the substrate succinate, while the binding sites for coenzyme A and phosphate are found in the alpha subunit. The chain is Succinate--CoA ligase [ADP-forming] subunit beta from Frankia casuarinae (strain DSM 45818 / CECT 9043 / HFP020203 / CcI3).